Reading from the N-terminus, the 434-residue chain is ATP-dependent RNA helicase RhlB (434 aa).

The Q motif signature appears at 9–37 (QKFADLGLEPQVLDGLNAKGFINCTPIQA). One can recognise a Helicase ATP-binding domain in the interval 40–219 (LPVLLAGQDI…FEHMQEPEHV (180 aa)). 53–60 (AQTGTGKT) is a binding site for ATP. A DEAD box motif is present at residues 165–168 (DEAD). A Helicase C-terminal domain is found at 245–390 (ALLQTLIEEE…QSDYDTSALL (146 aa)). The tract at residues 394–434 (PAPIRLQRRPPQNRRNGSNNGQRQSGNRKHSRPRPPRSPQA) is disordered. The span at 406–418 (NRRNGSNNGQRQS) shows a compositional bias: low complexity. The segment covering 419–428 (GNRKHSRPRP) has biased composition (basic residues).

Belongs to the DEAD box helicase family. RhlB subfamily. Component of the RNA degradosome, which is a multiprotein complex involved in RNA processing and mRNA degradation.

It is found in the cytoplasm. It carries out the reaction ATP + H2O = ADP + phosphate + H(+). In terms of biological role, DEAD-box RNA helicase involved in RNA degradation. Has RNA-dependent ATPase activity and unwinds double-stranded RNA. In Aliivibrio salmonicida (strain LFI1238) (Vibrio salmonicida (strain LFI1238)), this protein is ATP-dependent RNA helicase RhlB.